A 779-amino-acid chain; its full sequence is LPS-assembly protein LptD (779 aa).

A signal peptide spans 1-23 (MKIRYSVLSTFIISALYSQDTQA).

This sequence belongs to the LptD family. Component of the lipopolysaccharide transport and assembly complex. Interacts with LptE and LptA.

It is found in the cell outer membrane. Functionally, together with LptE, is involved in the assembly of lipopolysaccharide (LPS) at the surface of the outer membrane. This chain is LPS-assembly protein LptD, found in Haemophilus ducreyi (strain 35000HP / ATCC 700724).